The sequence spans 840 residues: Wings apart-like protein 2 (840 aa).

Disordered regions lie at residues 1 to 37, 56 to 78, and 532 to 594; these read MMER…EPVD, SDND…FGSN, and FDLE…DHHV. Residues 546-557 show a composition bias toward basic residues; sequence KQKKSKGQKRKG. The span at 558–567 shows a compositional bias: basic and acidic residues; that stretch reads SYRDKKDERS. The segment covering 569-585 has biased composition (polar residues); sequence QLFSSQEESNHGLNSQE. The region spanning 764–819 is the WAPL domain; it reads KEAEKMIVEAYSALLLAFLSTESRSIRNAIRDYLPKRDMAILVPVLDRFVAFHTTL.

This sequence belongs to the WAPL family. Interacts with the cohesin complex throughout the cell cycle. As to expression, expressed in roots, leaves, buds and siliques.

It is found in the nucleus. The protein resides in the chromosome. Regulator of sister chromatid cohesion in meiosis which negatively regulates cohesin association with chromatin, acting as an antagonist of CTF7. Cohesion ensures that chromosome partitioning is accurate in both meiotic and mitotic cells and plays an important role in DNA repair. Essential for the prophase removal of cohesin during meiosis thus determining the timely release of meiotic cohesion. Important for proper spindle attachment and assembly during meiosis. Helps to prevent abnormal centromere association during prophase I in meiocytes. Required for early embryonic patterning. Also involved in chromosome segregation during mitosis. This Arabidopsis thaliana (Mouse-ear cress) protein is Wings apart-like protein 2.